We begin with the raw amino-acid sequence, 430 residues long: Keratin, type I cytoskeletal 18 (430 aa).

Position 2 is an N-acetylserine (serine 2). The tract at residues 2-79 (SFTTRSTFST…GLAGMGGIQN (78 aa)) is head. Phosphoserine occurs at positions 7, 10, 15, and 18. Residues serine 30 and serine 31 each carry the phosphoserine; alternate modification. Residues serine 30 and serine 31 are each glycosylated (O-linked (GlcNAc) serine; alternate). Residue serine 34 is modified to Phosphoserine; by CDK1. Phosphotyrosine is present on tyrosine 36. Serine 42 carries the phosphoserine modification. Residue arginine 45 is modified to Omega-N-methylarginine. A Phosphoserine; alternate modification is found at serine 49. Serine 49 carries an O-linked (GlcNAc) serine; alternate glycan. The residue at position 51 (serine 51) is a Phosphoserine; by MAPKAPK2 and MAPKAPK3. Threonine 52 is modified (phosphothreonine). Serine 53 carries the post-translational modification Phosphoserine; by CAMK, PKC/PRKCE and AURKA. Arginine 55 is modified (omega-N-methylarginine). A Phosphoserine modification is found at serine 60. Threonine 65 carries the phosphothreonine modification. Residues 70-373 (GLAGMGGIQN…EALLNIKVKL (304 aa)) are necessary for interaction with PNN. Residues 77 to 128 (IQNEKETMQSLNDRLASYLDRVRSLETENRRLESKIREHLEKKGPQVRDWSH) are interaction with TRADD. Residues 80–115 (EKETMQSLNDRLASYLDRVRSLETENRRLESKIREH) are coil 1A. Positions 80–391 (EKETMQSLND…RLLEDGEDFN (312 aa)) constitute an IF rod domain. Residue lysine 81 forms a Glycyl lysine isopeptide (Lys-Gly) (interchain with G-Cter in SUMO2) linkage. Phosphoserine is present on residues serine 93 and serine 100. The interval 116 to 132 (LEKKGPQVRDWSHYFKI) is linker 1. Lysine 131 carries the post-translational modification N6-acetyllysine. Residues 133–224 (IEDLRAQIFA…KNHEEEVKGL (92 aa)) are coil 1B. Serine 177 carries the post-translational modification Phosphoserine. The tract at residues 225 to 248 (QAQIASSGLTVEVDAPKSQDLAKI) is linker 12. An interaction with DNAJB6 region spans residues 243 to 391 (QDLAKIMADI…RLLEDGEDFN (149 aa)). Residue lysine 247 forms a Glycyl lysine isopeptide (Lys-Gly) (interchain with G-Cter in SUMO2) linkage. Residues 249–387 (MADIRAQYDE…ATYRRLLEDG (139 aa)) are coil 2. The residue at position 302 (threonine 302) is a Phosphothreonine. Phosphoserine occurs at positions 305, 319, and 323. Glycyl lysine isopeptide (Lys-Gly) (interchain with G-Cter in SUMO2) cross-links involve residues lysine 370 and lysine 372. Residues 388–430 (EDFNLGDALDSSNSMQTIQKTTTRRIVDGKVVSETNDTKVLRH) form a tail region. 3 positions are modified to phosphoserine: serine 398, serine 399, and serine 401. The residue at position 404 (threonine 404) is a Phosphothreonine. A Glycyl lysine isopeptide (Lys-Gly) (interchain with G-Cter in SUMO2) cross-link involves residue lysine 417. Lysine 426 is subject to N6-acetyllysine; alternate. Residue lysine 426 forms a Glycyl lysine isopeptide (Lys-Gly) (interchain with G-Cter in SUMO1); alternate linkage. Lysine 426 is covalently cross-linked (Glycyl lysine isopeptide (Lys-Gly) (interchain with G-Cter in SUMO2); alternate).

Belongs to the intermediate filament family. As to quaternary structure, heterotetramer of two type I and two type II keratins. KRT18 associates with KRT8. Interacts with PLEC isoform 1C, when in a heterodimer with KRT8. Interacts with the thrombin-antithrombin complex. Interacts with PNN and mutated CFTR. Interacts with YWHAE, YWHAH and YWHAZ only when phosphorylated. Interacts with DNAJB6, TCHP and TRADD. Interacts with FAM83H. Interacts with EPPK1. Interacts with PKP1 and PKP2. In terms of assembly, (Microbial infection) Interacts with hepatitis C virus/HCV core protein. Phosphorylation at Ser-34 increases during mitosis. Hyperphosphorylated at Ser-53 in diseased cirrhosis liver. Phosphorylation increases by IL-6. In terms of processing, proteolytically cleaved by caspases during epithelial cell apoptosis. Cleavage occurs at Asp-238 by either caspase-3, caspase-6 or caspase-7. Post-translationally, O-GlcNAcylation increases solubility, and decreases stability by inducing proteasomal degradation. Expressed in colon, placenta, liver and very weakly in exocervix. Increased expression observed in lymph nodes of breast carcinoma.

It localises to the nucleus matrix. The protein localises to the cytoplasm. It is found in the perinuclear region. Its subcellular location is the nucleus. The protein resides in the nucleolus. Functionally, involved in the uptake of thrombin-antithrombin complexes by hepatic cells. When phosphorylated, plays a role in filament reorganization. Involved in the delivery of mutated CFTR to the plasma membrane. Together with KRT8, is involved in interleukin-6 (IL-6)-mediated barrier protection. The sequence is that of Keratin, type I cytoskeletal 18 (KRT18) from Homo sapiens (Human).